The following is a 453-amino-acid chain: MNPNQKIITIGSICMVVGIISLILQIGNIISIWISHSIQTGNQNHTGICNQGIITYNVVAGQDSTSVILTGNSSLCPIRGWAIHSKDNGIRIGSKGDVFVIREPFISCSHLECRTFFLTQGALLNDKHSNGTVKDRSPYRALMSCPVGEAPSPYNSRFESVAWSASACHDGMGWLTIGISGPDNGAVAVLKYNGIITETIKSWRKKILRTQESECTCVNGSCFTIMTDGPSNGLASYKIFKIEKGKVTKSIELNAPNSHYEECSCYPDTGKVMCVCRDNWHGSNRPWVSFDQNLDYQIGYICSGVFGDNPRPKDGPGSCGPVSADGANGVKGFSYRYGNGVWIGRTKSDSSRHGFEMIWDPNGWTETDSRFSVRQDVVAMTDRSGYSGSFVQHPELTGLDCMRPCFWVELIRGRPEEETIWTSGSIISFCGVNSDTVDWSWPDGAELPFTIDK.

Residues 1-6 lie on the Intravirion side of the membrane; sequence MNPNQK. The helical transmembrane segment at 7–27 threads the bilayer; sequence IITIGSICMVVGIISLILQIG. The tract at residues 11–33 is involved in apical transport and lipid raft association; that stretch reads GSICMVVGIISLILQIGNIISIW. Residues 28 to 453 are Virion surface-facing; sequence NIISIWISHS…GAELPFTIDK (426 aa). Positions 36–74 are hypervariable stalk region; the sequence is HSIQTGNQNHTGICNQGIITYNVVAGQDSTSVILTGNSS. Residues Asn-44 and Asn-72 are each glycosylated (N-linked (GlcNAc...) asparagine; by host). The interval 75 to 453 is head of neuraminidase; the sequence is LCPIRGWAIH…GAELPFTIDK (379 aa). Cystine bridges form between Cys-76–Cys-401, Cys-108–Cys-113, Cys-168–Cys-215, Cys-217–Cys-222, Cys-263–Cys-276, Cys-265–Cys-274, Cys-302–Cys-319, and Cys-405–Cys-430. Arg-102 contributes to the substrate binding site. Asn-130 carries an N-linked (GlcNAc...) asparagine; by host glycan. Asp-135 (proton donor/acceptor) is an active-site residue. Residue Arg-136 participates in substrate binding. N-linked (GlcNAc...) asparagine; by host glycosylation occurs at Asn-219. 261-262 provides a ligand contact to substrate; it reads EE. Residue Arg-277 coordinates substrate. Positions 278, 282, 308, and 328 each coordinate Ca(2+). Arg-352 provides a ligand contact to substrate. Catalysis depends on Tyr-386, which acts as the Nucleophile.

Belongs to the glycosyl hydrolase 34 family. In terms of assembly, homotetramer. Ca(2+) is required as a cofactor. In terms of processing, N-glycosylated.

It is found in the virion membrane. Its subcellular location is the host apical cell membrane. The catalysed reaction is Hydrolysis of alpha-(2-&gt;3)-, alpha-(2-&gt;6)-, alpha-(2-&gt;8)- glycosidic linkages of terminal sialic acid residues in oligosaccharides, glycoproteins, glycolipids, colominic acid and synthetic substrates.. Its activity is regulated as follows. Inhibited by the neuraminidase inhibitors zanamivir (Relenza) and oseltamivir (Tamiflu). These drugs interfere with the release of progeny virus from infected cells and are effective against all influenza strains. Resistance to neuraminidase inhibitors is quite rare. Unlike other strains, A/WSN/33 neuraminidase binds and activates plasminogen into plasmin in the vicinity of HA so that activated plasmin cleaves HA rendering the virus infectious. In terms of biological role, catalyzes the removal of terminal sialic acid residues from viral and cellular glycoconjugates. Cleaves off the terminal sialic acids on the glycosylated HA during virus budding to facilitate virus release. Additionally helps virus spread through the circulation by further removing sialic acids from the cell surface. These cleavages prevent self-aggregation and ensure the efficient spread of the progeny virus from cell to cell. Otherwise, infection would be limited to one round of replication. Described as a receptor-destroying enzyme because it cleaves a terminal sialic acid from the cellular receptors. May facilitate viral invasion of the upper airways by cleaving the sialic acid moieties on the mucin of the airway epithelial cells. Likely to plays a role in the budding process through its association with lipid rafts during intracellular transport. May additionally display a raft-association independent effect on budding. Plays a role in the determination of host range restriction on replication and virulence. Sialidase activity in late endosome/lysosome traffic seems to enhance virus replication. This is Neuraminidase from Influenza A virus (strain A/Wilson-Smith/1933 H1N1) (Influenza A virus (strain A/WS/1933 H1N1)).